The primary structure comprises 208 residues: Large ribosomal subunit protein uL4 (208 aa).

Residues 51 to 79 are disordered; the sequence is AKERAEVSFSTKKLKKQKGTGGARAGSRK.

It belongs to the universal ribosomal protein uL4 family. Part of the 50S ribosomal subunit.

One of the primary rRNA binding proteins, this protein initially binds near the 5'-end of the 23S rRNA. It is important during the early stages of 50S assembly. It makes multiple contacts with different domains of the 23S rRNA in the assembled 50S subunit and ribosome. In terms of biological role, forms part of the polypeptide exit tunnel. In Cytophaga hutchinsonii (strain ATCC 33406 / DSM 1761 / CIP 103989 / NBRC 15051 / NCIMB 9469 / D465), this protein is Large ribosomal subunit protein uL4.